The primary structure comprises 649 residues: DNA ligase (649 aa).

Residues 62–66 and 104–105 each bind NAD(+); these read DSTYD and ST. K142 acts as the N6-AMP-lysine intermediate in catalysis. Positions 158, 189, and 301 each coordinate NAD(+). Positions 389, 392, 405, and 411 each coordinate Zn(2+). One can recognise a BRCT domain in the interval 569 to 649; it reads PGETPVFGKI…LDYLALISTY (81 aa).

It belongs to the NAD-dependent DNA ligase family. LigA subfamily. Mg(2+) serves as cofactor. Requires Mn(2+) as cofactor.

The enzyme catalyses NAD(+) + (deoxyribonucleotide)n-3'-hydroxyl + 5'-phospho-(deoxyribonucleotide)m = (deoxyribonucleotide)n+m + AMP + beta-nicotinamide D-nucleotide.. Its function is as follows. DNA ligase that catalyzes the formation of phosphodiester linkages between 5'-phosphoryl and 3'-hydroxyl groups in double-stranded DNA using NAD as a coenzyme and as the energy source for the reaction. It is essential for DNA replication and repair of damaged DNA. The sequence is that of DNA ligase from Psychromonas ingrahamii (strain DSM 17664 / CCUG 51855 / 37).